We begin with the raw amino-acid sequence, 459 residues long: MVEKLWGGRFEASLDKQTEEFGASIKFEQRLAPFDLKGSLAHVKMLGETGIITTEESKKIAEGLKKVEEKLLNGQIEFKMENEDIHMNMESYLHQEIGPLAGKLHTARSRNDQVVTDMHLYLKSILEAVLEALKVLRETIVKLAVNQIDTIMPGYTHLQHAQPISFGQHLMAYYQMLTRDFERFEFNVKHTDMNPLGAAALAGTTFPIDRMLTTKLLGFEKAYDNSMDAVSDRDFILEFLSNASLLMMHLSRFCEELLLWSSHEFKFVSLSDTYSTGSSIMPQKKNPDMAELIRGKTGRVYGNLTALLTVMKGLPLAYNKDFQEDKEGMFDSADTIITSLTVMNGMLSTLTVNRVNMEKSTEQDFSNATELADYLATKGLPFRKAHELVGLLVLDCIKKGIYLQDVNLQDYQMLSPLINEDVYEVLKSRTAVSRRNSLGGTGFESVKKQIEEAKKELQI.

It belongs to the lyase 1 family. Argininosuccinate lyase subfamily.

The protein localises to the cytoplasm. The catalysed reaction is 2-(N(omega)-L-arginino)succinate = fumarate + L-arginine. The protein operates within amino-acid biosynthesis; L-arginine biosynthesis; L-arginine from L-ornithine and carbamoyl phosphate: step 3/3. This chain is Argininosuccinate lyase, found in Lactococcus lactis subsp. lactis (strain IL1403) (Streptococcus lactis).